The primary structure comprises 756 residues: 5-methyltetrahydropteroyltriglutamate--homocysteine methyltransferase (756 aa).

5-methyltetrahydropteroyltri-L-glutamate contacts are provided by residues 20–23 and Lys114; that span reads RELK. L-homocysteine contacts are provided by residues 433–435 and Glu486; that span reads IGS. Residues 433 to 435 and Glu486 each bind L-methionine; that span reads IGS. 5-methyltetrahydropteroyltri-L-glutamate is bound by residues 517–518 and Trp563; that span reads RC. Position 601 (Asp601) interacts with L-homocysteine. An L-methionine-binding site is contributed by Asp601. 5-methyltetrahydropteroyltri-L-glutamate is bound at residue Glu607. Residues His643, Cys645, and Glu667 each coordinate Zn(2+). His696 functions as the Proton donor in the catalytic mechanism. A Zn(2+)-binding site is contributed by Cys728.

This sequence belongs to the vitamin-B12 independent methionine synthase family. Zn(2+) is required as a cofactor.

It catalyses the reaction 5-methyltetrahydropteroyltri-L-glutamate + L-homocysteine = tetrahydropteroyltri-L-glutamate + L-methionine. It functions in the pathway amino-acid biosynthesis; L-methionine biosynthesis via de novo pathway; L-methionine from L-homocysteine (MetE route): step 1/1. Its function is as follows. Catalyzes the transfer of a methyl group from 5-methyltetrahydrofolate to homocysteine resulting in methionine formation. The protein is 5-methyltetrahydropteroyltriglutamate--homocysteine methyltransferase of Mycolicibacterium paratuberculosis (strain ATCC BAA-968 / K-10) (Mycobacterium paratuberculosis).